The following is a 354-amino-acid chain: Uroporphyrinogen decarboxylase (354 aa).

Substrate-binding positions include 27–31, Asp-77, Tyr-154, Thr-209, and His-327; that span reads RQAGR.

The protein belongs to the uroporphyrinogen decarboxylase family. In terms of assembly, homodimer.

It is found in the cytoplasm. It catalyses the reaction uroporphyrinogen III + 4 H(+) = coproporphyrinogen III + 4 CO2. It participates in porphyrin-containing compound metabolism; protoporphyrin-IX biosynthesis; coproporphyrinogen-III from 5-aminolevulinate: step 4/4. Catalyzes the decarboxylation of four acetate groups of uroporphyrinogen-III to yield coproporphyrinogen-III. The polypeptide is Uroporphyrinogen decarboxylase (Psychromonas ingrahamii (strain DSM 17664 / CCUG 51855 / 37)).